A 557-amino-acid polypeptide reads, in one-letter code: Inositol-3-phosphate synthase 1 (557 aa).

Residues glycine 67, glycine 68, asparagine 69, asparagine 70, aspartate 141, serine 177, valine 178, glutamine 188, arginine 191, threonine 228, alanine 229, asparagine 230, threonine 231, glycine 278, serine 279, aspartate 303, serine 306, asparagine 337, asparagine 338, aspartate 339, and lysine 352 each contribute to the NAD(+) site. The residue at position 279 (serine 279) is a Phosphoserine. Serine 357 is modified (phosphoserine). NAD(+)-binding residues include glycine 390, aspartate 391, aspartate 419, and serine 420. The residue at position 523 (serine 523) is a Phosphoserine. Residues 527 to 557 (CKKGSAPTAPNGCTGDANGHSQAEAPQMPTT) are disordered.

This sequence belongs to the myo-inositol 1-phosphate synthase family. NAD(+) is required as a cofactor. As to expression, expressed in testis (at protein level).

Its subcellular location is the cytoplasm. It catalyses the reaction D-glucose 6-phosphate = 1D-myo-inositol 3-phosphate. It functions in the pathway polyol metabolism; myo-inositol biosynthesis; myo-inositol from D-glucose 6-phosphate: step 1/2. Its function is as follows. Key enzyme in myo-inositol biosynthesis pathway that catalyzes the conversion of glucose 6-phosphate to 1-myo-inositol 1-phosphate in a NAD-dependent manner. Rate-limiting enzyme in the synthesis of all inositol-containing compounds. This chain is Inositol-3-phosphate synthase 1 (ISYNA1), found in Bos taurus (Bovine).